The primary structure comprises 616 residues: Chaperone protein HscA homolog (616 aa).

The protein belongs to the heat shock protein 70 family.

In terms of biological role, chaperone involved in the maturation of iron-sulfur cluster-containing proteins. Has a low intrinsic ATPase activity which is markedly stimulated by HscB. This chain is Chaperone protein HscA homolog, found in Vibrio atlanticus (strain LGP32) (Vibrio splendidus (strain Mel32)).